We begin with the raw amino-acid sequence, 366 residues long: Chorismate synthase (366 aa).

Residues R48 and R54 each coordinate NADP(+). FMN contacts are provided by residues R125–S127, N238–A239, G278, K293–S297, and R319.

The protein belongs to the chorismate synthase family. In terms of assembly, homotetramer. FMNH2 serves as cofactor.

The catalysed reaction is 5-O-(1-carboxyvinyl)-3-phosphoshikimate = chorismate + phosphate. It participates in metabolic intermediate biosynthesis; chorismate biosynthesis; chorismate from D-erythrose 4-phosphate and phosphoenolpyruvate: step 7/7. In terms of biological role, catalyzes the anti-1,4-elimination of the C-3 phosphate and the C-6 proR hydrogen from 5-enolpyruvylshikimate-3-phosphate (EPSP) to yield chorismate, which is the branch point compound that serves as the starting substrate for the three terminal pathways of aromatic amino acid biosynthesis. This reaction introduces a second double bond into the aromatic ring system. The polypeptide is Chorismate synthase (Neisseria gonorrhoeae (strain ATCC 700825 / FA 1090)).